An 856-amino-acid polypeptide reads, in one-letter code: 3-hydroxy-3-methylglutaryl-coenzyme A reductase (856 aa).

The next 4 helical transmembrane spans lie at Phe12–Leu32, Ile89–Ile109, Leu123–Leu143, and Val190–Tyr210. An N-linked (GlcNAc...) asparagine glycan is attached at Asn326. The chain crosses the membrane as a helical span at residues Ser344 to Phe364. A linker region spans residues Glu365 to Gly443. N-linked (GlcNAc...) asparagine glycosylation occurs at Asn412. The catalytic stretch occupies residues Gly443–Gly771. Residues Glu528 and Lys659 each act as charge relay system in the active site. Asn700 is a glycosylation site (N-linked (GlcNAc...) asparagine). Asp735 serves as the catalytic Charge relay system. The Proton donor role is filled by His834. Positions Arg836–Ser856 are disordered. An N-linked (GlcNAc...) asparagine glycan is attached at Asn838. Over residues Ser840–Ser856 the composition is skewed to low complexity.

Belongs to the HMG-CoA reductase family.

It localises to the endoplasmic reticulum membrane. It carries out the reaction (R)-mevalonate + 2 NADP(+) + CoA = (3S)-3-hydroxy-3-methylglutaryl-CoA + 2 NADPH + 2 H(+). The protein operates within metabolic intermediate biosynthesis; (R)-mevalonate biosynthesis; (R)-mevalonate from acetyl-CoA: step 3/3. With respect to regulation, the activity of HMG-CoA-reductase is suppressed by exogenous mevalonate. Functionally, synthesis of mevalonate for the production of non-sterol isoprenoids, which are essential for growth differentiation. This Blattella germanica (German cockroach) protein is 3-hydroxy-3-methylglutaryl-coenzyme A reductase.